The primary structure comprises 426 residues: Serine--tRNA ligase (426 aa).

Position 231-233 (231-233 (TAE)) interacts with L-serine. ATP is bound at residue 262–264 (RSE). An L-serine-binding site is contributed by glutamate 285. Residue 349–352 (EISS) coordinates ATP. Serine 385 lines the L-serine pocket.

Belongs to the class-II aminoacyl-tRNA synthetase family. Type-1 seryl-tRNA synthetase subfamily. Homodimer. The tRNA molecule binds across the dimer.

It localises to the cytoplasm. It carries out the reaction tRNA(Ser) + L-serine + ATP = L-seryl-tRNA(Ser) + AMP + diphosphate + H(+). The catalysed reaction is tRNA(Sec) + L-serine + ATP = L-seryl-tRNA(Sec) + AMP + diphosphate + H(+). It participates in aminoacyl-tRNA biosynthesis; selenocysteinyl-tRNA(Sec) biosynthesis; L-seryl-tRNA(Sec) from L-serine and tRNA(Sec): step 1/1. In terms of biological role, catalyzes the attachment of serine to tRNA(Ser). Is also able to aminoacylate tRNA(Sec) with serine, to form the misacylated tRNA L-seryl-tRNA(Sec), which will be further converted into selenocysteinyl-tRNA(Sec). The protein is Serine--tRNA ligase of Lysinibacillus sphaericus (strain C3-41).